A 150-amino-acid polypeptide reads, in one-letter code: Large ribosomal subunit protein bL9 (150 aa).

Belongs to the bacterial ribosomal protein bL9 family.

Binds to the 23S rRNA. This Ralstonia nicotianae (strain ATCC BAA-1114 / GMI1000) (Ralstonia solanacearum) protein is Large ribosomal subunit protein bL9.